An 806-amino-acid polypeptide reads, in one-letter code: MAEPLKEEDGEDGSGEPPGRVKAEPVHTAASVVAKNLALLKARSFDVTFDVGDEYEIIETIGNGAYGVVSSARRRLTGQQVAIKKIPNAFDVVTNAKRTLRELKILKHFKHDNIIAIKDILRPTVPYGEFRSVYVVLDLMESDLHQIIHSSQPLTLEHVRYFLYQLLRGLKYMHSAQVIHRDLKPSNLLVNENCELKIGDFGMARGLCTSPAEHQYFMTEYVATRWYRAPELMLSLHEYTQAIDLWSVGCIFGEMLARRQLFPGKNYVHQLQLIMMVLGTPSPAVIQAVGAERVRAYIQSLPPRQPVPWETVYPGADRQALSLLGRMLRFEPSARISAAAALRHPFLAKYHDPDDEPDCAPPFDFAFDREALTRERIKEAIVAEIEDFHARREGIRQQIRFQPSLQPVASEPVCPDVEMPSPWAPSGDCAMESPPPALPPCSGPAPDTVDLTLQPAPPASELAPPKREGAISDNTKAALKAALLKSLRSRLRDGPSAPLEAPEPRKPVTAQERQREREEKRRRRQERAKEREKRRQERERKERGAGTLGGPSTDPLAGLVLSDNDRSLLERWTRMARPPVPAPAPAPAPTPKPSSAQPTSPPNGPVSQSTAPLQPAGSIPGPASQPVCPPPGPVPQPAGPVPAPLQTAPSTSLLASQSLVPPSGLPGSGAPEVLPYFPSGPPPPDPGLTPQPSTSESPDVNLVTQQLSKSQVEDPLPPVFSGTPKGSGAGYGVGFDLEEFLNQSFDMGVADGPQDGQADSASLSASLLADWLEGHGMNPADIESLQREIQMDSPMLLSDLPDLQEP.

The interval Met-1–Ala-23 is disordered. Ala-2 carries the N-acetylalanine modification. The tract at residues Ala-2–Thr-77 is required for cytoplasmic targeting. The 293-residue stretch at Tyr-55–Leu-347 folds into the Protein kinase domain. ATP contacts are provided by residues Ile-61–Val-69 and Lys-84. The required for binding to MAP2K5 stretch occupies residues Gly-78 to Leu-139. A necessary for oligomerization region spans residues Met-140–Gln-406. Catalysis depends on Asp-182, which acts as the Proton acceptor. The short motif at Thr-219–Tyr-221 is the TXY element. The tract at residues Pro-407 to Pro-806 is may not be required for kinase activity; required to stimulate MEF2C activity. 2 disordered regions span residues Ala-424 to Thr-475 and Arg-488 to Ser-727. Residues Ser-433–Gly-443 show a composition bias toward pro residues. Composition is skewed to basic and acidic residues over residues Pro-502 to Glu-519, Arg-527 to Gly-544, and Asp-563 to Thr-573. A Nuclear localization signal motif is present at residues Arg-505–Glu-539. Composition is skewed to pro residues over residues Pro-578–Lys-592 and Val-627–Ala-643. Positions Thr-647–Val-660 are enriched in polar residues. Residues Pro-678 to Thr-689 are compositionally biased toward pro residues. Over residues Ser-693 to Ser-710 the composition is skewed to polar residues. Ser-710 bears the Phosphoserine mark. Thr-723 is subject to Phosphothreonine.

The protein belongs to the protein kinase superfamily. CMGC Ser/Thr protein kinase family. MAP kinase subfamily. In terms of assembly, interacts with MAP2K5. Forms oligomers. Interacts with MEF2A, MEF2C and MEF2D; the interaction phosphorylates the MEF2s and enhances transcriptional activity of MEF2A, MEF2C but not MEF2D. Interacts with SGK1. Interacts with PML. Interacts (via N-terminal half) with HSP90AB1-CDC37 chaperone complex in resting cells; the interaction is MAP2K5-independent and prevents MAPK7 from ubiquitination and proteasomal degradation. Interacts with STUB1/CHIP; the interaction is enhanced in the presence of IGF1 or MAP2K5 and promotes STUB1/CHIP E3 ligase activity. Mg(2+) is required as a cofactor. Dually phosphorylated on Thr-219 and Tyr-221, which activates the enzyme.

It localises to the cytoplasm. The protein localises to the nucleus. It is found in the PML body. It catalyses the reaction L-seryl-[protein] + ATP = O-phospho-L-seryl-[protein] + ADP + H(+). The enzyme catalyses L-threonyl-[protein] + ATP = O-phospho-L-threonyl-[protein] + ADP + H(+). With respect to regulation, activated by tyrosine and threonine phosphorylation. Activated in response to hyperosmolarity, hydrogen peroxide, and epidermal growth factor (EGF). Plays a role in various cellular processes such as proliferation, differentiation and cell survival. The upstream activator of MAPK7 is the MAPK kinase MAP2K5. Upon activation, it translocates to the nucleus and phosphorylates various downstream targets including MEF2C. EGF activates MAPK7 through a Ras-independent and MAP2K5-dependent pathway. As part of the MAPK/ERK signaling pathway, acts as a negative regulator of apoptosis in cardiomyocytes via interaction with STUB1/CHIP and promotion of STUB1-mediated ubiquitination and degradation of ICER-type isoforms of CREM. May have a role in muscle cell differentiation. May be important for endothelial function and maintenance of blood vessel integrity. MAP2K5 and MAPK7 interact specifically with one another and not with MEK1/ERK1 or MEK2/ERK2 pathways. Phosphorylates SGK1 at Ser-78 and this is required for growth factor-induced cell cycle progression. Involved in the regulation of p53/TP53 by disrupting the PML-MDM2 interaction. The polypeptide is Mitogen-activated protein kinase 7 (Mapk7) (Rattus norvegicus (Rat)).